Consider the following 769-residue polypeptide: Spastin (769 aa).

The segment at 1 to 100 is disordered; it reads MVRTKNQSSS…TSGNVPRGGQ (100 aa). Over 1 to 113 the chain is Cytoplasmic; that stretch reads MVRTKNQSSS…KQNLYVVSFP (113 aa). A required for localization to punctate cytoplasmic foci region spans residues 1 to 201; it reads MVRTKNQSSS…QTLEMAASRG (201 aa). Over residues 8-19 the composition is skewed to low complexity; sequence SSSSSASSSTKS. The span at 24 to 33 shows a compositional bias: gly residues; that stretch reads SGGGGGGGGS. Residues 54-63 show a composition bias toward polar residues; it reads SSKLSSNRQR. A compositionally biased stretch (low complexity) spans 64–78; the sequence is TTTTITTTTTTPGSS. Positions 114–134 form an intramembrane region, helical; it reads IIFLFNVLRSLIYQLFCIFRY. Residues 135–769 lie on the Cytoplasmic side of the membrane; the sequence is LYGASTKVIY…WSQDYGDITI (635 aa). Positions 199–769 are sufficient for interaction with microtubules and microtubule severing; it reads SRGGTGAGGY…WSQDYGDITI (571 aa). The MIT domain occupies 224–299; the sequence is HRRAFEYISK…SMARDRLHFL (76 aa). Positions 314 to 462 are disordered; sequence KEQPKKQLPH…NAASGSGSGA (149 aa). The segment covering 334 to 344 has biased composition (low complexity); it reads TTTSSGSSSSS. Composition is skewed to polar residues over residues 395 to 413 and 434 to 450; these read NKSQ…STSV and QFSS…RTPI. The span at 451–462 shows a compositional bias: low complexity; it reads NNNAASGSGSGA. The segment at 452-466 is required for interaction with microtubules; sequence NNAASGSGSGASTPL. 534–541 is a binding site for ATP; sequence GPPGNGKT.

This sequence belongs to the AAA ATPase family. Spastin subfamily. As to quaternary structure, homohexamer. The homohexamer is stabilized by ATP-binding. The homohexamer may adopt a ring conformation through which microtubules pass prior to being severed. Interacts with microtubules. Interacts with atl; may be involved in microtubule dynamics.

It localises to the membrane. The protein localises to the cytoplasm. It is found in the cytoskeleton. Its subcellular location is the microtubule organizing center. The protein resides in the centrosome. It localises to the chromosome. The protein localises to the lipid droplet. It carries out the reaction n ATP + n H2O + a microtubule = n ADP + n phosphate + (n+1) alpha/beta tubulin heterodimers.. Functionally, ATP-dependent microtubule severing protein. Stimulates microtubule minus-end depolymerization and poleward microtubule flux in the mitotic spindle. Regulates microtubule stability in the neuromuscular junction synapse. Involved in lipid metabolism by regulating the size and distribution of lipid droplets. Involved in axon regeneration by regulating microtubule severing. This is Spastin from Drosophila virilis (Fruit fly).